The following is a 251-amino-acid chain: Coproheme decarboxylase (251 aa).

Residues Arg133, 147-151, His174, Gln187, and Ser225 each bind Fe-coproporphyrin III; that span reads YPMSK. Tyr147 is a catalytic residue.

This sequence belongs to the ChdC family. Type 1 subfamily. Fe-coproporphyrin III serves as cofactor.

It catalyses the reaction Fe-coproporphyrin III + 2 H2O2 + 2 H(+) = heme b + 2 CO2 + 4 H2O. The enzyme catalyses Fe-coproporphyrin III + H2O2 + H(+) = harderoheme III + CO2 + 2 H2O. The catalysed reaction is harderoheme III + H2O2 + H(+) = heme b + CO2 + 2 H2O. Its pathway is porphyrin-containing compound metabolism; protoheme biosynthesis. Functionally, involved in coproporphyrin-dependent heme b biosynthesis. Catalyzes the decarboxylation of Fe-coproporphyrin III (coproheme) to heme b (protoheme IX), the last step of the pathway. The reaction occurs in a stepwise manner with a three-propionate intermediate. In Listeria innocua serovar 6a (strain ATCC BAA-680 / CLIP 11262), this protein is Coproheme decarboxylase.